The primary structure comprises 362 residues: Protein RAFTIN 1B (362 aa).

Residues 1 to 20 (MARFLVALLAATLVAVQAGG) form the signal peptide. The disordered stretch occupies residues 58–94 (STSFVRDPEDRPPFDYRDYSRSSSDDEPSKSTVAASG). The span at 63–86 (RDPEDRPPFDYRDYSRSSSDDEPS) shows a compositional bias: basic and acidic residues. Residue Asn102 is glycosylated (N-linked (GlcNAc...) asparagine). The BURP domain maps to 142 to 356 (FFHEEAVRVG…PYGHIIWAKN (215 aa)).

In terms of tissue distribution, specifically expressed in anthers, in the tapetum and microspores (at protein level).

Its function is as follows. Required for pollen development. Probably synthesized in the tapetum, packaged in Ubisch bodies and transported at appropriate stages to the micropsores. The protein is Protein RAFTIN 1B (RAFTIN1B) of Triticum aestivum (Wheat).